We begin with the raw amino-acid sequence, 472 residues long: Glutamate synthase [NADPH] small chain (472 aa).

Residues 38-69 (GQAKAQADRCLSCGNPYCEWKCPVHNYIPNWL) enclose the 4Fe-4S ferredoxin-type domain. [4Fe-4S] cluster-binding residues include cysteine 47, cysteine 50, cysteine 55, and cysteine 59.

In terms of assembly, aggregate of 4 catalytic active heterodimers, consisting of a large and a small subunit. [4Fe-4S] cluster serves as cofactor.

The enzyme catalyses 2 L-glutamate + NADP(+) = L-glutamine + 2-oxoglutarate + NADPH + H(+). It functions in the pathway amino-acid biosynthesis; L-glutamate biosynthesis via GLT pathway; L-glutamate from 2-oxoglutarate and L-glutamine (NADP(+) route): step 1/1. Its pathway is energy metabolism; nitrogen metabolism. Functionally, catalyzes the conversion of L-glutamine and 2-oxoglutarate into two molecules of L-glutamate. The sequence is that of Glutamate synthase [NADPH] small chain (gltD) from Escherichia coli (strain K12).